We begin with the raw amino-acid sequence, 517 residues long: Bifunctional purine biosynthesis protein PurH (517 aa).

One can recognise an MGS-like domain in the interval 1–145 (MSPLALVSVS…KNHKDVSVLV (145 aa)).

It belongs to the PurH family.

The catalysed reaction is (6R)-10-formyltetrahydrofolate + 5-amino-1-(5-phospho-beta-D-ribosyl)imidazole-4-carboxamide = 5-formamido-1-(5-phospho-D-ribosyl)imidazole-4-carboxamide + (6S)-5,6,7,8-tetrahydrofolate. It catalyses the reaction IMP + H2O = 5-formamido-1-(5-phospho-D-ribosyl)imidazole-4-carboxamide. It functions in the pathway purine metabolism; IMP biosynthesis via de novo pathway; 5-formamido-1-(5-phospho-D-ribosyl)imidazole-4-carboxamide from 5-amino-1-(5-phospho-D-ribosyl)imidazole-4-carboxamide (10-formyl THF route): step 1/1. It participates in purine metabolism; IMP biosynthesis via de novo pathway; IMP from 5-formamido-1-(5-phospho-D-ribosyl)imidazole-4-carboxamide: step 1/1. This is Bifunctional purine biosynthesis protein PurH from Prochlorococcus marinus (strain MIT 9301).